The chain runs to 701 residues: Elongation factor G (701 aa).

A tr-type G domain is found at Ser8–Thr290. GTP-binding positions include Ala17 to Thr24, Asp88 to His92, and Asn142 to Asp145.

Belongs to the TRAFAC class translation factor GTPase superfamily. Classic translation factor GTPase family. EF-G/EF-2 subfamily.

The protein localises to the cytoplasm. Functionally, catalyzes the GTP-dependent ribosomal translocation step during translation elongation. During this step, the ribosome changes from the pre-translocational (PRE) to the post-translocational (POST) state as the newly formed A-site-bound peptidyl-tRNA and P-site-bound deacylated tRNA move to the P and E sites, respectively. Catalyzes the coordinated movement of the two tRNA molecules, the mRNA and conformational changes in the ribosome. The protein is Elongation factor G of Haemophilus ducreyi (strain 35000HP / ATCC 700724).